Here is a 197-residue protein sequence, read N- to C-terminus: Probable nicotinate-nucleotide adenylyltransferase (197 aa).

The protein belongs to the NadD family.

The enzyme catalyses nicotinate beta-D-ribonucleotide + ATP + H(+) = deamido-NAD(+) + diphosphate. The protein operates within cofactor biosynthesis; NAD(+) biosynthesis; deamido-NAD(+) from nicotinate D-ribonucleotide: step 1/1. Catalyzes the reversible adenylation of nicotinate mononucleotide (NaMN) to nicotinic acid adenine dinucleotide (NaAD). This is Probable nicotinate-nucleotide adenylyltransferase from Bordetella avium (strain 197N).